Here is a 1033-residue protein sequence, read N- to C-terminus: Error-prone DNA polymerase (1033 aa).

This sequence belongs to the DNA polymerase type-C family. DnaE2 subfamily.

It is found in the cytoplasm. It carries out the reaction DNA(n) + a 2'-deoxyribonucleoside 5'-triphosphate = DNA(n+1) + diphosphate. In terms of biological role, DNA polymerase involved in damage-induced mutagenesis and translesion synthesis (TLS). It is not the major replicative DNA polymerase. The chain is Error-prone DNA polymerase from Teredinibacter turnerae (strain ATCC 39867 / T7901).